Consider the following 128-residue polypeptide: Sirohydrochlorin cobaltochelatase (128 aa).

His9 (proton acceptor) is an active-site residue. His9 provides a ligand contact to Co(2+). Substrate contacts are provided by residues Lys43 and Phe68–His73. His73 contacts Co(2+).

This sequence belongs to the CbiX family. CbiXS subfamily. As to quaternary structure, homotetramer; dimer of dimers.

The enzyme catalyses Co-sirohydrochlorin + 2 H(+) = sirohydrochlorin + Co(2+). The protein operates within cofactor biosynthesis; adenosylcobalamin biosynthesis; cob(II)yrinate a,c-diamide from sirohydrochlorin (anaerobic route): step 1/10. Its function is as follows. Catalyzes the insertion of Co(2+) into sirohydrochlorin as part of the anaerobic pathway to cobalamin biosynthesis. This is Sirohydrochlorin cobaltochelatase from Saccharolobus solfataricus (strain ATCC 35092 / DSM 1617 / JCM 11322 / P2) (Sulfolobus solfataricus).